Reading from the N-terminus, the 75-residue chain is Large ribosomal subunit protein bL31 (75 aa).

C16, C18, C38, and C41 together coordinate Zn(2+).

It belongs to the bacterial ribosomal protein bL31 family. Type A subfamily. In terms of assembly, part of the 50S ribosomal subunit. Zn(2+) serves as cofactor.

In terms of biological role, binds the 23S rRNA. The chain is Large ribosomal subunit protein bL31 from Nocardioides sp. (strain ATCC BAA-499 / JS614).